The chain runs to 396 residues: Flavohemoprotein (396 aa).

The Globin domain maps to 1 to 136 (MLDAQTIATV…LANVFINREA (136 aa)). Residue H85 participates in heme b binding. Active-site charge relay system residues include Y95 and E135. The segment at 147-396 (GGWEGTRDFR…YECFGPHKVL (250 aa)) is reductase. Residues 150 to 255 (EGTRDFRIVA…VAPAGDFFMA (106 aa)) enclose the FAD-binding FR-type domain. Residues Y188 and 204–207 (RQYS) each bind FAD. NADP(+) is bound at residue 268 to 273 (GVGQTP). Residue 389 to 392 (CFGP) participates in FAD binding.

It belongs to the globin family. Two-domain flavohemoproteins subfamily. This sequence in the C-terminal section; belongs to the flavoprotein pyridine nucleotide cytochrome reductase family. In terms of assembly, monomer. It depends on FAD as a cofactor. Heme b serves as cofactor.

The protein resides in the cytoplasm. The catalysed reaction is 2 nitric oxide + NADPH + 2 O2 = 2 nitrate + NADP(+) + H(+). The enzyme catalyses 2 nitric oxide + NADH + 2 O2 = 2 nitrate + NAD(+) + H(+). Functionally, is involved in NO detoxification in an aerobic process, termed nitric oxide dioxygenase (NOD) reaction that utilizes O(2) and NAD(P)H to convert NO to nitrate, which protects the bacterium from various noxious nitrogen compounds. Therefore, plays a central role in the inducible response to nitrosative stress. In terms of biological role, in the presence of oxygen and NADH, HMP has NADH oxidase activity, which leads to the generation of superoxide and H(2)O(2), both in vitro and in vivo, and it has been suggested that HMP might act as an amplifier of superoxide stress. Under anaerobic conditions, HMP also exhibits nitric oxide reductase and FAD reductase activities. However, all these reactions are much lower than NOD activity. Various electron acceptors are also reduced by HMP in vitro, including dihydropterine, ferrisiderophores, ferric citrate, cytochrome c, nitrite, S-nitrosoglutathione, and alkylhydroperoxides. However, it is unknown if these reactions are of any biological significance in vivo. The chain is Flavohemoprotein (hmp) from Escherichia coli (strain K12).